The following is a 927-amino-acid chain: Ribosome-releasing factor 2, mitochondrial (927 aa).

A mitochondrion-targeting transit peptide spans methionine 1–threonine 57. Residues glutamate 64 to serine 379 enclose the tr-type G domain. GTP is bound by residues alanine 73–threonine 80, aspartate 163–histidine 167, and asparagine 217–aspartate 220.

Belongs to the TRAFAC class translation factor GTPase superfamily. Classic translation factor GTPase family. EF-G/EF-2 subfamily.

The protein resides in the mitochondrion. Its function is as follows. Mitochondrial GTPase that mediates the disassembly of ribosomes from messenger RNA at the termination of mitochondrial protein biosynthesis. Not involved in the GTP-dependent ribosomal translocation step during translation elongation. The polypeptide is Ribosome-releasing factor 2, mitochondrial (mef2) (Talaromyces marneffei (strain ATCC 18224 / CBS 334.59 / QM 7333) (Penicillium marneffei)).